The primary structure comprises 408 residues: Acetate kinase (408 aa).

N7 contacts Mg(2+). K14 is an ATP binding site. A substrate-binding site is contributed by R91. The active-site Proton donor/acceptor is the D148. Residues 208-212, 283-285, and 331-335 each bind ATP; these read HLGNG, DFR, and GIGEN. A Mg(2+)-binding site is contributed by E384.

It belongs to the acetokinase family. Homodimer. Requires Mg(2+) as cofactor. Mn(2+) serves as cofactor.

Its subcellular location is the cytoplasm. The enzyme catalyses acetate + ATP = acetyl phosphate + ADP. The protein operates within metabolic intermediate biosynthesis; acetyl-CoA biosynthesis; acetyl-CoA from acetate: step 1/2. Catalyzes the formation of acetyl phosphate from acetate and ATP. Can also catalyze the reverse reaction. This Methanosarcina mazei (Methanosarcina frisia) protein is Acetate kinase.